Reading from the N-terminus, the 138-residue chain is Histone H2B (138 aa).

Residues 1 to 10 are compositionally biased toward basic and acidic residues; sequence MPPKAAEKKP. A disordered region spans residues 1 to 47; sequence MPPKAAEKKPSTAGKAPAGKAPEKKEAGKKTTAAGGEKKKRSKTRKE. An N6-acetyllysine; alternate mark is found at K8 and K9. Residues K8 and K9 each participate in a glycyl lysine isopeptide (Lys-Gly) (interchain with G-Cter in SUMO); alternate cross-link. Residues 11-20 show a composition bias toward low complexity; the sequence is STAGKAPAGK. Position 15 is an N6-acetyllysine (K15). An N6-acetyllysine; alternate modification is found at K24. Residue K24 forms a Glycyl lysine isopeptide (Lys-Gly) (interchain with G-Cter in SUMO); alternate linkage. K25 is covalently cross-linked (Glycyl lysine isopeptide (Lys-Gly) (interchain with G-Cter in SUMO)). Residue K132 forms a Glycyl lysine isopeptide (Lys-Gly) (interchain with G-Cter in ubiquitin) linkage.

It belongs to the histone H2B family. In terms of assembly, the nucleosome is a histone octamer containing two molecules each of H2A, H2B, H3 and H4 assembled in one H3-H4 heterotetramer and two H2A-H2B heterodimers. The octamer wraps approximately 147 bp of DNA. Monoubiquitinated to form H2BK123ub1. H2BK123ub1 gives a specific tag for epigenetic transcriptional activation and is also prerequisite for H3K4me and H3K79me formation. H2BK123ub1 also modulates the formation of double-strand breaks during meiosis and is a prerequisite for DNA-damage checkpoint activation. In terms of processing, acetylated by GCN5 to form H2BK11ac and H2BK16ac. H2BK16ac can also be formed by ESA1. Acetylation of N-terminal lysines and particularly formation of H2BK11acK16ac has a positive effect on transcription. Post-translationally, sumoylation to form H2BK6su or H2BK7su, and probably also H2BK16su or H2BK17su, occurs preferentially near the telomeres and represses gene transcription.

It is found in the nucleus. The protein resides in the chromosome. In terms of biological role, core component of nucleosome. Nucleosomes wrap and compact DNA into chromatin, limiting DNA accessibility to the cellular machineries which require DNA as a template. Histones thereby play a central role in transcription regulation, DNA repair, DNA replication and chromosomal stability. DNA accessibility is regulated via a complex set of post-translational modifications of histones, also called histone code, and nucleosome remodeling. The polypeptide is Histone H2B (HTB1) (Ajellomyces capsulatus (Darling's disease fungus)).